Reading from the N-terminus, the 482-residue chain is DNA polymerase II small subunit (482 aa).

The protein belongs to the DNA polymerase delta/II small subunit family. As to quaternary structure, heterodimer of a large subunit and a small subunit.

It carries out the reaction DNA(n) + a 2'-deoxyribonucleoside 5'-triphosphate = DNA(n+1) + diphosphate. It catalyses the reaction Exonucleolytic cleavage in the 3'- to 5'-direction to yield nucleoside 5'-phosphates.. Possesses two activities: a DNA synthesis (polymerase) and an exonucleolytic activity that degrades single-stranded DNA in the 3' to 5' direction. Has a template-primer preference which is characteristic of a replicative DNA polymerase. The sequence is that of DNA polymerase II small subunit (polB) from Methanothermobacter thermautotrophicus (strain ATCC 29096 / DSM 1053 / JCM 10044 / NBRC 100330 / Delta H) (Methanobacterium thermoautotrophicum).